We begin with the raw amino-acid sequence, 296 residues long: Fructose-bisphosphate aldolase class 1 (296 aa).

Glutamate 175 serves as the catalytic Proton acceptor. Lysine 212 functions as the Schiff-base intermediate with dihydroxyacetone-P in the catalytic mechanism.

This sequence belongs to the class I fructose-bisphosphate aldolase family.

The enzyme catalyses beta-D-fructose 1,6-bisphosphate = D-glyceraldehyde 3-phosphate + dihydroxyacetone phosphate. The protein operates within carbohydrate degradation; glycolysis; D-glyceraldehyde 3-phosphate and glycerone phosphate from D-glucose: step 4/4. The protein is Fructose-bisphosphate aldolase class 1 of Staphylococcus aureus (strain USA300).